We begin with the raw amino-acid sequence, 177 residues long: Ubiquinol-cytochrome c reductase iron-sulfur subunit (177 aa).

Residues Ile-18–Ile-38 traverse the membrane as a helical segment. The Rieske domain maps to Ala-88–Arg-175. [2Fe-2S] cluster is bound by residues Cys-120, His-122, Cys-139, and His-142. A disulfide bridge connects residues Cys-125 and Cys-141.

Belongs to the Rieske iron-sulfur protein family. As to quaternary structure, the main subunits of complex b-c1 are: cytochrome b, cytochrome c1 and the Rieske protein. Requires [2Fe-2S] cluster as cofactor.

It localises to the cell membrane. The catalysed reaction is a quinol + 2 Fe(III)-[cytochrome c](out) = a quinone + 2 Fe(II)-[cytochrome c](out) + 2 H(+)(out). Its function is as follows. Component of the ubiquinol-cytochrome c reductase complex (complex III or cytochrome b-c1 complex), which is a respiratory chain that generates an electrochemical potential coupled to ATP synthesis. This is Ubiquinol-cytochrome c reductase iron-sulfur subunit (petA) from Rickettsia prowazekii (strain Madrid E).